Consider the following 253-residue polypeptide: Probable U3 small nucleolar RNA-associated protein 11 (253 aa).

The interval 1–26 is disordered; the sequence is MAAAFRKAAKSRQREHRERSQPGFRK. Glycyl lysine isopeptide (Lys-Gly) (interchain with G-Cter in SUMO2) cross-links involve residues Lys74, Lys83, and Lys86. Thr90 is modified (phosphothreonine). Residues Lys103, Lys120, Lys143, Lys144, Lys180, Lys211, Lys218, Lys235, and Lys236 each participate in a glycyl lysine isopeptide (Lys-Gly) (interchain with G-Cter in SUMO2) cross-link. Ser241 is modified (phosphoserine). Lys246 participates in a covalent cross-link: Glycyl lysine isopeptide (Lys-Gly) (interchain with G-Cter in SUMO2).

Belongs to the UTP11 family. Part of the small subunit (SSU) processome, composed of more than 70 proteins and the RNA chaperone small nucleolar RNA (snoRNA) U3.

Its subcellular location is the nucleus. The protein localises to the nucleolus. In terms of biological role, part of the small subunit (SSU) processome, first precursor of the small eukaryotic ribosomal subunit. During the assembly of the SSU processome in the nucleolus, many ribosome biogenesis factors, an RNA chaperone and ribosomal proteins associate with the nascent pre-rRNA and work in concert to generate RNA folding, modifications, rearrangements and cleavage as well as targeted degradation of pre-ribosomal RNA by the RNA exosome. Involved in nucleolar processing of pre-18S ribosomal RNA. This is Probable U3 small nucleolar RNA-associated protein 11 from Homo sapiens (Human).